Consider the following 256-residue polypeptide: 5'-nucleotidase SurE (256 aa).

A divalent metal cation-binding residues include D8, D9, S40, and N92.

It belongs to the SurE nucleotidase family. It depends on a divalent metal cation as a cofactor.

Its subcellular location is the cytoplasm. It catalyses the reaction a ribonucleoside 5'-phosphate + H2O = a ribonucleoside + phosphate. In terms of biological role, nucleotidase that shows phosphatase activity on nucleoside 5'-monophosphates. The protein is 5'-nucleotidase SurE of Sinorhizobium fredii (strain NBRC 101917 / NGR234).